The chain runs to 229 residues: Flagellar L-ring protein (229 aa).

A signal peptide spans 1 to 25 (MKQVRLPSSATVRAACAVAVAALAG). Cys26 carries N-palmitoyl cysteine lipidation. A lipid anchor (S-diacylglycerol cysteine) is attached at Cys26.

It belongs to the FlgH family. The basal body constitutes a major portion of the flagellar organelle and consists of four rings (L,P,S, and M) mounted on a central rod.

The protein localises to the cell outer membrane. Its subcellular location is the bacterial flagellum basal body. Assembles around the rod to form the L-ring and probably protects the motor/basal body from shearing forces during rotation. In Burkholderia cenocepacia (strain ATCC BAA-245 / DSM 16553 / LMG 16656 / NCTC 13227 / J2315 / CF5610) (Burkholderia cepacia (strain J2315)), this protein is Flagellar L-ring protein.